Reading from the N-terminus, the 592-residue chain is MEKARPLWANSLQFVFACISYAVGLGNVWRFPYLCQMYGGGSFLVPYIIMLIVEGMPLLYLELAVGQRMRQGSIGAWRTISPYLSGVGVASVVVSFFLSMYYNVINAWAFWYLFHSFQDPLPWSVCPLNGNHTGYDEECEKASSTQYFWYRKTLNISPSLQENGGVQWEPALCLLLAWLVVYLCILRGTESTGKVVYFTASLPYCVLIIYLIRGLTLHGATNGLMYMFTPKIEQLANPKAWINAATQIFFSLGLGFGSLIAFASYNEPSNNCQKHAIIVSLINSFTSIFASIVTFSIYGFKATFNYENCLKKVSLLLTNTFDLEDGFLTASNLEQVKGYLASAYPSKYSEMFPQIKNCSLESELDTAVQGTGLAFIVYTEAIKNMEVSQLWSVLYFFMLLMLGIGSMLGNTAAILTPLTDSKIISSHLPKEAISGLVCLVNCAIGMVFTMEAGNYWFDIFNDYAATLSLLLIVLVETIAVCYVYGLRRFESDLKAMTGRAVSWYWKVMWAGVSPLLIVSLFVFYLSDYILTGTLKYQAWDASQGQLVTKDYPAYALAVIGLLVASSTMCIPLAALGTFVQRRLKRGDADPVA.

Topologically, residues 1–5 (MEKAR) are cytoplasmic. A helical transmembrane segment spans residues 6–26 (PLWANSLQFVFACISYAVGLG). Residues 27 to 42 (NVWRFPYLCQMYGGGS) lie on the Extracellular side of the membrane. Residues 43 to 63 (FLVPYIIMLIVEGMPLLYLEL) traverse the membrane as a helical segment. Topologically, residues 64–79 (AVGQRMRQGSIGAWRT) are cytoplasmic. A helical transmembrane segment spans residues 80-100 (ISPYLSGVGVASVVVSFFLSM). Residues 101–165 (YYNVINAWAF…ISPSLQENGG (65 aa)) lie on the Extracellular side of the membrane. The N-linked (GlcNAc...) asparagine glycan is linked to Asn131. Residues 166–186 (VQWEPALCLLLAWLVVYLCIL) form a helical membrane-spanning segment. At 187 to 194 (RGTESTGK) the chain is on the cytoplasmic side. A helical membrane pass occupies residues 195–215 (VVYFTASLPYCVLIIYLIRGL). At 216-241 (TLHGATNGLMYMFTPKIEQLANPKAW) the chain is on the extracellular side. Residues 242 to 262 (INAATQIFFSLGLGFGSLIAF) traverse the membrane as a helical segment. Topologically, residues 263–276 (ASYNEPSNNCQKHA) are cytoplasmic. A helical membrane pass occupies residues 277 to 297 (IIVSLINSFTSIFASIVTFSI). The Extracellular segment spans residues 298 to 389 (YGFKATFNYE…EAIKNMEVSQ (92 aa)). The N-linked (GlcNAc...) asparagine glycan is linked to Asn357. The helical transmembrane segment at 390-410 (LWSVLYFFMLLMLGIGSMLGN) threads the bilayer. At 411–431 (TAAILTPLTDSKIISSHLPKE) the chain is on the cytoplasmic side. The chain crosses the membrane as a helical span at residues 432 to 452 (AISGLVCLVNCAIGMVFTMEA). Over 453–465 (GNYWFDIFNDYAA) the chain is Extracellular. The chain crosses the membrane as a helical span at residues 466 to 486 (TLSLLLIVLVETIAVCYVYGL). At 487–504 (RRFESDLKAMTGRAVSWY) the chain is on the cytoplasmic side. The helical transmembrane segment at 505–525 (WKVMWAGVSPLLIVSLFVFYL) threads the bilayer. At 526–554 (SDYILTGTLKYQAWDASQGQLVTKDYPAY) the chain is on the extracellular side. A helical membrane pass occupies residues 555–575 (ALAVIGLLVASSTMCIPLAAL). Over 576-592 (GTFVQRRLKRGDADPVA) the chain is Cytoplasmic.

This sequence belongs to the sodium:neurotransmitter symporter (SNF) (TC 2.A.22) family. SLC6A20 subfamily. In terms of tissue distribution, kidney and small intestine. Expressed in the S3 segment of the proximal tubule. Expressed in neurons.

The protein resides in the apical cell membrane. The enzyme catalyses L-proline(out) + chloride(out) + 2 Na(+)(out) = L-proline(in) + chloride(in) + 2 Na(+)(in). It carries out the reaction L-pipecolate(out) + chloride(out) + 2 Na(+)(out) = L-pipecolate(in) + chloride(in) + 2 Na(+)(in). The catalysed reaction is sarcosine(out) + chloride(out) + 2 Na(+)(out) = sarcosine(in) + chloride(in) + 2 Na(+)(in). It catalyses the reaction N-methyl-L-proline(out) + chloride(out) + 2 Na(+)(out) = N-methyl-L-proline(in) + chloride(in) + 2 Na(+)(in). The enzyme catalyses 2-methyl-2-(methylamino)propanoate(out) + chloride(out) + 2 Na(+)(out) = 2-methyl-2-(methylamino)propanoate(in) + chloride(in) + 2 Na(+)(in). It carries out the reaction glycine betaine(out) + chloride(out) + 2 Na(+)(out) = glycine betaine(in) + chloride(in) + 2 Na(+)(in). The catalysed reaction is glycine(out) + chloride(out) + 2 Na(+)(out) = glycine(in) + chloride(in) + 2 Na(+)(in). In terms of biological role, mediates the Na(+)- and Cl(-)-dependent uptake of imino acids such as L-proline, N-methyl-L-proline and pipecolate as well as N-methylated amino acids. Also transports glycine, regulates proline and glycine homeostasis in the brain playing a role in the modulation of NMDAR currents. The protein is Sodium- and chloride-dependent transporter XTRP3 of Homo sapiens (Human).